The primary structure comprises 56 residues: Photosystem II assembly protein Psb34 (56 aa).

At 1 to 33 (MRYTTDEGGRLNNFAIEPKVYQAQPWTPQQKVR) the chain is on the cytoplasmic side. The chain crosses the membrane as a helical span at residues 34 to 54 (AALLVGGGLLLVAGLVAIAVG). The Extracellular segment spans residues 55–56 (VS).

Part of photosystem II (PSII) assembly intermediate complex PSII-I; crystallized from a strain without psbJ, it forms monomeric PSII before addition of the oxygen evolving complex. PSII-I includes 3 assembly factors not found in mature PSII (Psb27, Psb28 and Psb34). The N-terminus of Psb34 (this protein) binds to CP47 (psbB) in close proximity to PsbH on the cytoplasmic face of PSII.

It localises to the cellular thylakoid membrane. Its function is as follows. Involved in photosystem II (PSII) assembly and/or repair, probably in conversion of late PSII assembly intermediates into mature dimeric PSII. This is Photosystem II assembly protein Psb34 from Thermosynechococcus vestitus (strain NIES-2133 / IAM M-273 / BP-1).